A 334-amino-acid chain; its full sequence is SH3 and cysteine-rich domain-containing protein 3 (334 aa).

The segment at 1 to 26 (MAQYDQLEDKDSLDIHDNPPAPENVV) is disordered. Residues 7 to 17 (LEDKDSLDIHD) are compositionally biased toward basic and acidic residues. The segment at 62–113 (PHKFKDHYCKKPKFCDVCARMIVLNNKFALRCKNCKTNIHHSCQSYVQFQRC) adopts a Phorbol-ester/DAG-type zinc-finger fold. Positions 178–190 (EEEAQQPKEDEEG) are enriched in acidic residues. A disordered region spans residues 178 to 215 (EEEAQQPKEDEEGAEGKQDGDKKDKTATDDKNKKQQQT). Positions 191-210 (AEGKQDGDKKDKTATDDKNK) are enriched in basic and acidic residues. SH3 domains are found at residues 217–276 (SQSH…RVRA) and 277–334 (GERV…LHEL).

As to quaternary structure, component of a calcium channel complex with CACNA1S. As to expression, expressed in muscles at the muscle triad.

The protein localises to the cytoplasm. The protein resides in the cell membrane. It localises to the sarcolemma. It is found in the T-tubule. In terms of biological role, required for normal excitation-contraction coupling in skeletal muscle and for normal muscle contraction in response to membrane depolarization. Required for normal Ca(2+) release from the sarcplasmic reticulum, which ultimately leads to muscle contraction. Probably functions via its effects on muscle calcium channels. Increases CACNA1S channel activity, in addition to its role in enhancing the expression of CACNA1S at the cell membrane. Has a redundant role in promoting the expression of the calcium channel CACNA1S at the cell membrane. This Danio rerio (Zebrafish) protein is SH3 and cysteine-rich domain-containing protein 3.